Reading from the N-terminus, the 574-residue chain is Proline--tRNA ligase (574 aa).

It belongs to the class-II aminoacyl-tRNA synthetase family. ProS type 1 subfamily. In terms of assembly, homodimer.

It localises to the cytoplasm. It catalyses the reaction tRNA(Pro) + L-proline + ATP = L-prolyl-tRNA(Pro) + AMP + diphosphate. In terms of biological role, catalyzes the attachment of proline to tRNA(Pro) in a two-step reaction: proline is first activated by ATP to form Pro-AMP and then transferred to the acceptor end of tRNA(Pro). As ProRS can inadvertently accommodate and process non-cognate amino acids such as alanine and cysteine, to avoid such errors it has two additional distinct editing activities against alanine. One activity is designated as 'pretransfer' editing and involves the tRNA(Pro)-independent hydrolysis of activated Ala-AMP. The other activity is designated 'posttransfer' editing and involves deacylation of mischarged Ala-tRNA(Pro). The misacylated Cys-tRNA(Pro) is not edited by ProRS. The chain is Proline--tRNA ligase from Buchnera aphidicola subsp. Baizongia pistaciae (strain Bp).